Here is a 506-residue protein sequence, read N- to C-terminus: Maturase K (506 aa).

The protein belongs to the intron maturase 2 family. MatK subfamily.

The protein resides in the plastid. It localises to the chloroplast. In terms of biological role, usually encoded in the trnK tRNA gene intron. Probably assists in splicing its own and other chloroplast group II introns. The protein is Maturase K of Trifolium subterraneum (Subterranean clover).